A 1648-amino-acid polypeptide reads, in one-letter code: Putative 1-phosphatidylinositol-3-phosphate 5-kinase FAB1C (1648 aa).

The span at 97–106 (YDKVHPRDSP) shows a compositional bias: basic and acidic residues. Disordered stretches follow at residues 97–116 (YDKV…ATES), 241–276 (QEDH…NDDA), 721–746 (SEIP…ENQL), and 1083–1139 (KTGD…GTSL). Over residues 1084-1130 (TGDDNAPRNPEMHDPPKIDRRMQEGSDERDEQSHTDSEANGDNKDPE) the composition is skewed to basic and acidic residues. The 324-residue stretch at 1316-1639 (NLNNRESEPS…RFRKAMTTYF (324 aa)) folds into the PIPK domain.

Component of the PI(3,5)P2 regulatory complex at least composed of ATG18, SAC/FIG4, FAB1 and VAC14. Mg(2+) is required as a cofactor. The cofactor is Mn(2+).

The catalysed reaction is a 1,2-diacyl-sn-glycero-3-phospho-(1D-myo-inositol-3-phosphate) + ATP = a 1,2-diacyl-sn-glycero-3-phospho-(1D-myo-inositol-3,5-bisphosphate) + ADP + H(+). In terms of biological role, the PI(3,5)P2 regulatory complex regulates both the synthesis and turnover of phosphatidylinositol 3,5-bisphosphate (PtdIns(3,5)P2). Catalyzes the phosphorylation of phosphatidylinositol 3-phosphate on the fifth hydroxyl of the myo-inositol ring, to form phosphatidylinositol 3,5-bisphosphate. The polypeptide is Putative 1-phosphatidylinositol-3-phosphate 5-kinase FAB1C (FAB1C) (Arabidopsis thaliana (Mouse-ear cress)).